We begin with the raw amino-acid sequence, 206 residues long: Superoxide dismutase [Mn] (206 aa).

Positions 27, 82, 168, and 172 each coordinate Mn(2+).

It belongs to the iron/manganese superoxide dismutase family. Homodimer. Mn(2+) is required as a cofactor.

The catalysed reaction is 2 superoxide + 2 H(+) = H2O2 + O2. Its function is as follows. Destroys superoxide anion radicals which are normally produced within the cells and which are toxic to biological systems. The protein is Superoxide dismutase [Mn] (sodA) of Salmonella typhi.